A 185-amino-acid chain; its full sequence is Tumor necrosis factor receptor superfamily member 17 (185 aa).

Residues 1–49 (MAQQCFHSEYFDSLLHACKPCHLRCSNPPATCQPYCDPSVTSSVKGTYT) lie on the Extracellular side of the membrane. Residues 4–36 (QCFHSEYFDSLLHACKPCHLRCSNPPATCQPYC) form a TNFR-Cys repeat. Disulfide bonds link C5–C18, C21–C32, and C25–C36. The chain crosses the membrane as a helical; Signal-anchor for type III membrane protein span at residues 50 to 70 (VLWIFLGLTLVLSLALFTISF). The Cytoplasmic portion of the chain corresponds to 71 to 185 (LLRKMNPEAL…MGMEKPTHTR (115 aa)).

In terms of assembly, associates with TRAF1, TRAF2, TRAF3, TRAF5 and TRAF6. Detected in spleen, thymus, bone marrow and heart, and at lower levels in kidney and lung.

The protein localises to the membrane. In terms of biological role, receptor for TNFSF13B/BLyS/BAFF and TNFSF13/APRIL. Promotes B-cell survival and plays a role in the regulation of humoral immunity. Activates NF-kappa-B and JNK. This chain is Tumor necrosis factor receptor superfamily member 17 (Tnfrsf17), found in Mus musculus (Mouse).